Reading from the N-terminus, the 230-residue chain is Ly6/PLAUR domain-containing protein 8 (230 aa).

A signal peptide spans 1–20 (MKSFLFAGIVVVLTVAAVDT). N-linked (GlcNAc...) asparagine glycosylation is found at N37, N44, N74, N77, N90, N106, N110, N132, N137, N156, N168, N181, and N197. A UPAR/Ly6 domain is found at 125 to 172 (CPACYGNNETSCNETRKCYGERCVSIIAEFTNETKTLVLKGCSNVSIS). The GPI-anchor amidated serine moiety is linked to residue S211. The propeptide at 212–230 (QASFTPLALASILLLSLLL) is removed in mature form.

This sequence belongs to the CNF-like-inhibitor family. In terms of processing, highly N-glycosylated. Not O-glycosylated. GPI-anchored. The GPI-anchor is cleaved, leading to secretion into the colonic lumen.

It is found in the cell membrane. The protein localises to the secreted. Its function is as follows. Secreted protein specifically required to prevent invasion of Gram-negative bacteria in the inner mucus layer of the colon epithelium, a portion of the large intestine which is free of commensal microbiota. Prevents invasion of flagellated microbiota by binding to the flagellum of bacteria, such as P.mirabilis, thereby inhibiting bacterial motility in the intestinal lumen. Segregation of intestinal bacteria and epithelial cells in the colon is required to preserve intestinal homeostasis. The sequence is that of Ly6/PLAUR domain-containing protein 8 (LYPD8) from Bos taurus (Bovine).